Reading from the N-terminus, the 405-residue chain is Cytoplasmic tRNA 2-thiolation protein 2 (405 aa).

Belongs to the CTU2/NCS2 family.

It is found in the cytoplasm. It participates in tRNA modification; 5-methoxycarbonylmethyl-2-thiouridine-tRNA biosynthesis. Plays a central role in 2-thiolation of mcm(5)S(2)U at tRNA wobble positions of tRNA(Lys), tRNA(Glu) and tRNA(Gln). May act by forming a heterodimer with NCS6/CTU1 that ligates sulfur from thiocarboxylated URM1 onto the uridine of tRNAs at wobble position. The sequence is that of Cytoplasmic tRNA 2-thiolation protein 2 from Drosophila pseudoobscura pseudoobscura (Fruit fly).